The primary structure comprises 40 residues: Photosystem II reaction center protein T (40 aa).

The chain crosses the membrane as a helical span at residues 3-23 (ALVYTFLLVGTLGIIFFAIFF).

This sequence belongs to the PsbT family. PSII is composed of 1 copy each of membrane proteins PsbA, PsbB, PsbC, PsbD, PsbE, PsbF, PsbH, PsbI, PsbJ, PsbK, PsbL, PsbM, PsbT, PsbY, PsbZ, Psb30/Ycf12, at least 3 peripheral proteins of the oxygen-evolving complex and a large number of cofactors. It forms dimeric complexes.

The protein resides in the plastid. It is found in the chloroplast thylakoid membrane. In terms of biological role, found at the monomer-monomer interface of the photosystem II (PS II) dimer, plays a role in assembly and dimerization of PSII. PSII is a light-driven water plastoquinone oxidoreductase, using light energy to abstract electrons from H(2)O, generating a proton gradient subsequently used for ATP formation. The chain is Photosystem II reaction center protein T from Anthoceros angustus (Hornwort).